Reading from the N-terminus, the 390-residue chain is GPI inositol-deacylase (390 aa).

Residues 21 to 41 (FIVYFIICLTIIISALGVYLY) form a helical membrane-spanning segment. The active site involves S202. Residues 354 to 374 (VHLLSLTIFALKWTIIVLAII) traverse the membrane as a helical segment.

Belongs to the GPI inositol-deacylase family.

The protein resides in the endoplasmic reticulum membrane. Involved in inositol deacylation of GPI-anchored proteins which plays important roles in the quality control and ER-associated degradation of GPI-anchored proteins. This is GPI inositol-deacylase (BST1) from Candida albicans (strain SC5314 / ATCC MYA-2876) (Yeast).